We begin with the raw amino-acid sequence, 242 residues long: Probable septum site-determining protein MinC (242 aa).

It belongs to the MinC family. Interacts with MinD and FtsZ.

In terms of biological role, cell division inhibitor that blocks the formation of polar Z ring septums. Rapidly oscillates between the poles of the cell to destabilize FtsZ filaments that have formed before they mature into polar Z rings. Prevents FtsZ polymerization. In Brucella anthropi (strain ATCC 49188 / DSM 6882 / CCUG 24695 / JCM 21032 / LMG 3331 / NBRC 15819 / NCTC 12168 / Alc 37) (Ochrobactrum anthropi), this protein is Probable septum site-determining protein MinC.